We begin with the raw amino-acid sequence, 356 residues long: Retinoic acid-induced protein 3 (356 aa).

The Extracellular portion of the chain corresponds to Met-1–Thr-35. The chain crosses the membrane as a helical span at residues Leu-36–Cys-56. Residues Lys-57–Pro-68 are Cytoplasmic-facing. The helical transmembrane segment at Ala-69 to Ile-89 threads the bilayer. The Extracellular segment spans residues Lys-90–Phe-101. A helical membrane pass occupies residues Leu-102 to Ile-122. Residues Lys-123–Leu-131 are Cytoplasmic-facing. Residues Ser-132 to Ile-152 form a helical membrane-spanning segment. At Glu-153–Asp-178 the chain is on the extracellular side. Asn-160 carries an N-linked (GlcNAc...) asparagine glycan. A helical transmembrane segment spans residues Phe-179–Leu-199. The Cytoplasmic portion of the chain corresponds to Val-200–His-214. The helical transmembrane segment at Ile-215–Ile-235 threads the bilayer. The Extracellular segment spans residues Pro-236–Asp-244. Residues Thr-245 to Pro-265 traverse the membrane as a helical segment. Topologically, residues Glu-266–Ser-356 are cytoplasmic. Position 303 is a phosphoserine (Ser-303). Residues Tyr-318 and Tyr-321 each carry the phosphotyrosine modification. Residues Ile-336–Ser-356 form a disordered region. Ser-344 carries the post-translational modification Phosphoserine. Tyr-346 and Tyr-349 each carry phosphotyrosine.

This sequence belongs to the G-protein coupled receptor 3 family. As to quaternary structure, interacts (via its transmembrane domain) with EGFR. Phosphorylated in two conserved double-tyrosine motifs, Tyr 318/Tyr-321 and Tyr-346/Tyr-349 by EGFR. Tyr-318 and Tyr-321 are the preferred residues responsible for EGFR-mediated GPRC5A phosphorylation. In terms of tissue distribution, expressed predominantly in normal fetal and adult lung. Almost undetectable or expressed at very low levels in other tissues.

It localises to the cell membrane. In terms of biological role, orphan receptor. Could be involved in modulating differentiation and maintaining homeostasis of epithelial cells. This retinoic acid-inducible GPCR provides evidence for a possible interaction between retinoid and G-protein signaling pathways. Functions as a negative modulator of EGFR signaling. Acts as a lung tumor suppressor. The chain is Retinoic acid-induced protein 3 (Gprc5a) from Mus musculus (Mouse).